The sequence spans 485 residues: Glutamate--tRNA ligase (485 aa).

R6 lines the L-glutamate pocket. The 'HIGH' region motif lies at 9–19 (PSPTGNLHIGT). L-glutamate is bound by residues Y192 and 210-214 (RGEDH). Residues 248-252 (KLSKR) carry the 'KMSKS' region motif. K251 provides a ligand contact to ATP.

This sequence belongs to the class-I aminoacyl-tRNA synthetase family. Glutamate--tRNA ligase type 1 subfamily. Monomer. Requires Does not require zinc. as cofactor.

The protein resides in the cytoplasm. It carries out the reaction tRNA(Glu) + L-glutamate + ATP = L-glutamyl-tRNA(Glu) + AMP + diphosphate. Functionally, non-discriminating glutamyl-tRNA synthetase. Catalyzes the attachment of glutamate to tRNA(Glu) in a two-step reaction: glutamate is first activated by ATP to form Glu-AMP and then transferred to the acceptor end of tRNA(Glu). Acylates both tRNA(Glu) and tRNA(Gln) with glutamate, but has 13-fold higher efficiency with tRNA(Glu). The protein is Glutamate--tRNA ligase (gltX) of Thermosynechococcus vestitus (strain NIES-2133 / IAM M-273 / BP-1).